Reading from the N-terminus, the 32-residue chain is uncharacterized protein (32 aa).

This is an uncharacterized protein from Schizosaccharomyces pombe (strain 972 / ATCC 24843) (Fission yeast).